A 360-amino-acid chain; its full sequence is sn-glycerol-3-phosphate import ATP-binding protein UgpC (360 aa).

The ABC transporter domain maps to 4-235 (LSLKGVRKSY…PATTFVASFI (232 aa)). Residue 37-44 (GPSGCGKS) coordinates ATP.

It belongs to the ABC transporter superfamily. sn-glycerol-3-phosphate importer (TC 3.A.1.1.3) family. In terms of assembly, the complex is composed of two ATP-binding proteins (UgpC), two transmembrane proteins (UgpA and UgpE) and a solute-binding protein (UgpB).

Its subcellular location is the cell inner membrane. It carries out the reaction sn-glycerol 3-phosphate(out) + ATP + H2O = sn-glycerol 3-phosphate(in) + ADP + phosphate + H(+). Functionally, part of the ABC transporter complex UgpBAEC involved in sn-glycerol-3-phosphate (G3P) import. Responsible for energy coupling to the transport system. The protein is sn-glycerol-3-phosphate import ATP-binding protein UgpC of Burkholderia pseudomallei (strain 1710b).